Consider the following 419-residue polypeptide: Protein FAM181B (419 aa).

Positions 107–157 are disordered; sequence LMGAAPPGPSSPGAADTPAKRPLAGAQTVPVPVPAHGKAAPRREASQAAAA.

Belongs to the FAM181 family.

This is Protein FAM181B (FAM181B) from Bos taurus (Bovine).